A 233-amino-acid polypeptide reads, in one-letter code: 7-cyano-7-deazaguanine synthase (233 aa).

ATP is bound at residue 7–17; the sequence is CSGGLDSVSLA. 4 residues coordinate Zn(2+): cysteine 185, cysteine 193, cysteine 196, and cysteine 199.

This sequence belongs to the QueC family. Requires Zn(2+) as cofactor.

The enzyme catalyses 7-carboxy-7-deazaguanine + NH4(+) + ATP = 7-cyano-7-deazaguanine + ADP + phosphate + H2O + H(+). It participates in purine metabolism; 7-cyano-7-deazaguanine biosynthesis. Functionally, catalyzes the ATP-dependent conversion of 7-carboxy-7-deazaguanine (CDG) to 7-cyano-7-deazaguanine (preQ(0)). The chain is 7-cyano-7-deazaguanine synthase from Paracoccus denitrificans (strain Pd 1222).